The following is a 783-amino-acid chain: Polyribonucleotide nucleotidyltransferase 1, mitochondrial (783 aa).

Residues 1-46 constitute a mitochondrion transit peptide; sequence MAACRYCCSCLRLRPLSDGPFCLPGRDRALTQLLVRALWSSTGSRA. N6-acetyllysine is present on residues Lys250, Lys264, Lys285, and Lys289. Residue Lys552 is modified to N6-succinyllysine. Residues 605–664 enclose the KH domain; it reads PVVETVQVPLSKRAKFVGPGGYNLKKLQAETGVTISQVDEETFSVFAPTPSALHEARDFI. One can recognise an S1 motif domain in the interval 679–750; it reads GAVYTATITE…ADGRMRLSRK (72 aa). 2 positions are modified to phosphoserine: Ser754 and Ser782.

It belongs to the polyribonucleotide nucleotidyltransferase family. As to quaternary structure, homotrimer; in free form. Homooligomer. Component of the mitochondrial degradosome (mtEXO) complex which is a heteropentamer containing 2 copies of SUPV3L1 and 3 copies of PNPT1. As part of the mitochondrial degradosome complex, interacts with GRSF1 in an RNA-dependent manner; the interaction enhances the activity of the complex. Interacts with TCL1A; the interaction has no effect on PNPT1 exonuclease activity.

It is found in the cytoplasm. It localises to the mitochondrion matrix. The protein resides in the mitochondrion intermembrane space. The catalysed reaction is RNA(n+1) + phosphate = RNA(n) + a ribonucleoside 5'-diphosphate. Its function is as follows. RNA-binding protein implicated in numerous RNA metabolic processes. Catalyzes the phosphorolysis of single-stranded polyribonucleotides processively in the 3'-to-5' direction. Mitochondrial intermembrane factor with RNA-processing exoribonulease activity. Component of the mitochondrial degradosome (mtEXO) complex, that degrades 3' overhang double-stranded RNA with a 3'-to-5' directionality in an ATP-dependent manner. Involved in the degradation of non-coding mitochondrial transcripts (MT-ncRNA) and tRNA-like molecules. Required for correct processing and polyadenylation of mitochondrial mRNAs. Plays a role as a cytoplasmic RNA import factor that mediates the translocation of small RNA components like the 5S RNA, the RNA subunit of ribonuclease P and the mitochondrial RNA-processing (MRP) RNA, into the mitochondrial matrix. Plays a role in mitochondrial morphogenesis and respiration; regulates the expression of the electron transport chain (ETC) components at the mRNA and protein levels. In the cytoplasm, shows a 3'-to-5' exoribonuclease mediating mRNA degradation activity; degrades c-myc mRNA upon treatment with IFNB1/IFN-beta, resulting in a growth arrest in melanoma cells. Regulates the stability of specific mature miRNAs in melanoma cells; specifically and selectively degrades miR-221, preferentially. Also plays a role in RNA cell surveillance by cleaning up oxidized RNAs. Binds to the RNA subunit of ribonuclease P, MRP RNA and miR-221 microRNA. The chain is Polyribonucleotide nucleotidyltransferase 1, mitochondrial (PNPT1) from Pongo abelii (Sumatran orangutan).